The chain runs to 318 residues: MANTLEQLKSYTTIVADTGDIEAIKRYQPEDATTNPSLILKAAQIPEYRALIDNAIAWAKLQSADIEQQIDDASDKLAVNIGVEILKLVPGRISTEVDARLSFDKEKSIAKAHKLVRLYQEAGVDKSRILIKLASTWEGICAAKELEQEGINCNLTLLFSFAQARACAEAGVYLISPFVGRILDWYKNDTGKDYDAVNDPGVVSVTEIYNYYKQHGYNTVVMGASFRNIGEIIELAGCDRLTIGPSLLEELANSQVAIQPKLLPASTTVAAGEPLTEAQFRWDFNQDPMAVDKLAEGIRNFAIDQGKLEVMLKAKLAN.

Lysine 132 functions as the Schiff-base intermediate with substrate in the catalytic mechanism.

Belongs to the transaldolase family. Type 1 subfamily. Homodimer.

It localises to the cytoplasm. The enzyme catalyses D-sedoheptulose 7-phosphate + D-glyceraldehyde 3-phosphate = D-erythrose 4-phosphate + beta-D-fructose 6-phosphate. Its pathway is carbohydrate degradation; pentose phosphate pathway; D-glyceraldehyde 3-phosphate and beta-D-fructose 6-phosphate from D-ribose 5-phosphate and D-xylulose 5-phosphate (non-oxidative stage): step 2/3. In terms of biological role, transaldolase is important for the balance of metabolites in the pentose-phosphate pathway. In Shewanella sp. (strain ANA-3), this protein is Transaldolase.